Here is a 63-residue protein sequence, read N- to C-terminus: MNFYNIFVFVALILAITIGQSEAGWLKKIGKKIERVGQHTRDATIQGLGVAQQAPNVAATARG.

An N-terminal signal peptide occupies residues 1–19; the sequence is MNFYNIFVFVALILAITIG. An Arginine amide modification is found at R62.

This sequence belongs to the cecropin family.

The protein resides in the secreted. Its function is as follows. Cecropins have lytic and antibacterial activity against several Gram-positive and Gram-negative bacteria. This chain is Cecropin-A1 (CecA1), found in Drosophila simulans (Fruit fly).